The following is a 529-amino-acid chain: tRNA (uracil-O(2)-)-methyltransferase (529 aa).

The tract at residues 78–107 is disordered; that stretch reads IFDTHEGPVDDDKKDTDKDKNTPVPPNLQD. The segment covering 80 to 98 has biased composition (basic and acidic residues); that stretch reads DTHEGPVDDDKKDTDKDKN.

The protein belongs to the TRM44 family.

The protein localises to the cytoplasm. The enzyme catalyses uridine(44) in tRNA(Ser) + S-adenosyl-L-methionine = 2'-O-methyluridine(44) in tRNA(Ser) + S-adenosyl-L-homocysteine + H(+). Its function is as follows. Probable adenosyl-L-methionine (AdoMet)-dependent tRNA (uracil-O(2)-)-methyltransferase. The sequence is that of tRNA (uracil-O(2)-)-methyltransferase (TRM44) from Yarrowia lipolytica (strain CLIB 122 / E 150) (Yeast).